Here is a 24-residue protein sequence, read N- to C-terminus: DYE-linked aldehyde dehydrogenase, alpha chain (24 aa).

Heterotetramer composed of an alpha, a beta and two gamma chains. The cofactor is Mo-molybdopterin cytosine dinucleotide.

Active with aldehydes and formate esters as substrates. In Amycolatopsis methanolica, this protein is DYE-linked aldehyde dehydrogenase, alpha chain.